Here is a 446-residue protein sequence, read N- to C-terminus: Citrate/sodium symporter (446 aa).

Residues 1–27 (MTNMSQPPATEKKGVSDLLGFKIFGMP) lie on the Cytoplasmic side of the membrane. A helical transmembrane segment spans residues 28-44 (LPLYAFALITLLLSHFY). Topologically, residues 45 to 50 (NALPTD) are periplasmic. Residues 51-71 (IVGGFAIMFIIGAIFGEIGKR) traverse the membrane as a helical segment. Residues 72–80 (LPIFNKYIG) lie on the Cytoplasmic side of the membrane. The helical transmembrane segment at 81–95 (GAPVMIFLVAAYFVY) threads the bilayer. At 96-115 (AGIFTQKEIDAISNVMDKSN) the chain is on the periplasmic side. Residues 116-130 (FLNLFIAVLITGAIL) form a helical membrane-spanning segment. Topologically, residues 131 to 136 (SVNRRL) are cytoplasmic. Residues 137–166 (LLKSLLGYIPTILMGIVGASIFGIAIGLVF) form a helical membrane-spanning segment. Over 167–181 (GIPVDRIMMLYVLPI) the chain is Periplasmic. Na(+) contacts are provided by Ile181 and Gly183. Positions 182-189 (MGGGNGAG) form an intramembrane region, helical. Citrate-binding residues include Asn186 and Gly187. Residues 190–212 (AVPLSEIYHSVTGRSREEYYSTA) lie on the Periplasmic side of the membrane. The helical transmembrane segment at 213-233 (IAILTIANIFAIVFAAVLDII) threads the bilayer. Over 234–264 (GKKHTWLSGEGELVRKASFKVEEDEKTGQIT) the chain is Cytoplasmic. Residues 265 to 287 (HRETAVGLVLSTTCFLLAYVVAK) form a helical membrane-spanning segment. The Periplasmic portion of the chain corresponds to 288-299 (KILPSIGGVAIH). Residues 300–315 (YFAWMVLIVAALNASG) form a helical membrane-spanning segment. Residues 316 to 327 (LCSPEIKAGAKR) are Cytoplasmic-facing. The helical transmembrane segment at 328–351 (LSDFFSKQLLWVLMVGVGVCYTDL) threads the bilayer. At 352–359 (QEIINAIT) the chain is on the periplasmic side. A helical transmembrane segment spans residues 360–381 (FANVVIAAIIVIGAVLGAAIGG). The Cytoplasmic portion of the chain corresponds to 382 to 398 (WLMGFFPIESAITAGLC). The Na(+) site is built by Met399 and Asn401. Positions 399–406 (MANRGGSG) form an intramembrane region, helical. Citrate-binding residues include Arg402, Gly404, and Ser405. Topologically, residues 407-416 (DLEVLSACNR) are cytoplasmic. A helical transmembrane segment spans residues 417–438 (MNLISYAQISSRLGGGIVLVIA). Arg428 provides a ligand contact to citrate. Residues 439–446 (SIVFGMMI) are Periplasmic-facing.

This sequence belongs to the 2-hydroxycarboxylate transporter (2-HCT) (TC 2.A.24) family. As to quaternary structure, homodimer.

Its subcellular location is the cell inner membrane. It catalyses the reaction citrate(out) + 2 Na(+)(out) = citrate(in) + 2 Na(+)(in). In the absence of Na(+), transport is inhibited by the thiol reagents N-ethylmaleimide (NEM) and the methanethiosulfonate (MTS) derivatives MTSEA, MTSET and MTSES. However, inactivation by NEM, MTSES and MTSET is prevented by the presence of Na(+). In the absence of Na(+), the substrate citrate has no effect on the inactivation by permeable or impermeable thiol reagents. In contrast, when subsaturating concentrations of Na(+) are present, citrate significantly reduces inactivation, suggesting ordered binding of the substrate and co-ion; citrate is bound after Na(+). The membrane impermeable bulky maleimide AmdiS does not inactivate the transporter in right-side-out membrane vesicles. The apparent affinity for Na(+) decreases with increasing proton concentration. Protons cannot replace Na(+) in the translocation step but the decrease in apparent affinity for Na(+) towards lower pH suggests that protons can compete with Na(+) for the cation-binding sites. Functionally, secondary active transporter that catalyzes the uptake of citrate across the membrane with the concomitant uptake of sodium. There are conflicting data regarding exact substrate stoichiometry: the sodium/citrate stoichiometry was predicted to be 1, but the latest studies suggest that CitS transports citrate in symport with 2 sodium ions. Transports citrate as a divalent citrate anion, H-citrate(2-). Shows narrow substrate specificity and is very specific, transporting only citrate and to a low extent citromalate. Symport of Na(+) is absolutely required in the range pH 5-7 because no uptake can be detected in the absence of Na(+). Lithium can replace Na(+) in the symport reaction but it takes about a 200-fold higher concentration of Li(+) over Na(+) to achieve the same rate of uptake. This Klebsiella pneumoniae protein is Citrate/sodium symporter.